Consider the following 288-residue polypeptide: MGQKVHPHGFRLGISTDWKSRWFADKLYKDYIGEDVKIRRMMSKGLERAGISKVDIERTRDRVRVDIHTARPGIVIGRKGAEADRIRGKLEKLTGKQVQLNIIEVKSPESDAQLVAQGVAEQLSSRVSFRRAMRKAMQSAMKNPVCKGIRVQVSGRLGGAEMSRTEFYREGRVPLHTLRANIEYGFFEARTTFGRIGVKVWIYKGDAVPGRETPAEAPSRPRRERGDRSERPRRGRSGSSGTTAGGTEAGRAAATTIAQAAETPSGEPVDADAVASAATQPAETQQEG.

The region spanning 38–106 (IRRMMSKGLE…QVQLNIIEVK (69 aa)) is the KH type-2 domain. The tract at residues 209 to 288 (PGRETPAEAP…TQPAETQQEG (80 aa)) is disordered. Basic and acidic residues predominate over residues 219 to 232 (SRPRRERGDRSERP). Residues 249–264 (AGRAAATTIAQAAETP) show a composition bias toward low complexity. Over residues 277 to 288 (AATQPAETQQEG) the composition is skewed to polar residues.

Belongs to the universal ribosomal protein uS3 family. In terms of assembly, part of the 30S ribosomal subunit. Forms a tight complex with proteins S10 and S14.

Its function is as follows. Binds the lower part of the 30S subunit head. Binds mRNA in the 70S ribosome, positioning it for translation. The chain is Small ribosomal subunit protein uS3 from Salinispora arenicola (strain CNS-205).